A 569-amino-acid chain; its full sequence is Pyruvate decarboxylase (569 aa).

Residues aspartate 38 and histidine 124 each coordinate pyruvate. Residues threonine 398 and 421-423 contribute to the thiamine diphosphate site; that span reads GSI. Residue aspartate 451 participates in Mg(2+) binding. Thiamine diphosphate-binding positions include 452 to 453 and 478 to 483; these read GS and NQGYTI. 2 residues coordinate Mg(2+): asparagine 478 and glycine 480. Glutamate 484 lines the pyruvate pocket.

This sequence belongs to the TPP enzyme family. In terms of assembly, homotetramer. The cofactor is Mg(2+). Thiamine diphosphate serves as cofactor.

It carries out the reaction a 2-oxocarboxylate + H(+) = an aldehyde + CO2. The enzyme catalyses pyruvate + H(+) = acetaldehyde + CO2. The polypeptide is Pyruvate decarboxylase (pdcA) (Aspergillus terreus (strain NIH 2624 / FGSC A1156)).